A 304-amino-acid polypeptide reads, in one-letter code: Sperm microtubule inner protein 6 (304 aa).

It belongs to the SPMIP6 family. Microtubule inner protein component of sperm flagellar doublet microtubules. Interacts with alpha-tubulin.

The protein localises to the cytoplasm. It localises to the cytoskeleton. It is found in the nucleus. Its subcellular location is the mitochondrion. The protein resides in the flagellum axoneme. In terms of biological role, may participate in intramanchette transport and midpiece formation of the sperm tail. May play a potential role in somatic cell proliferation. This Bos taurus (Bovine) protein is Sperm microtubule inner protein 6 (SPMIP6).